The following is a 1283-amino-acid chain: 5-oxoprolinase PfmaA (1283 aa).

The segment at 1256 to 1283 is disordered; that stretch reads NTPGGGAWGKPEGDADGYREEDQAGDGI. Over residues 1266–1277 the composition is skewed to basic and acidic residues; that stretch reads PEGDADGYREED.

Belongs to the oxoprolinase family. Homodimer.

It catalyses the reaction 5-oxo-L-proline + ATP + 2 H2O = L-glutamate + ADP + phosphate + H(+). In terms of biological role, 5-oxoprolinase; part of the gene cluster that mediates the biosynthesis of dihydroxynaphthalene (DHN)-melanin, a bluish-green pigment forming a dark layer in the conidial wall that protects the conidia from UV radiations. The first step of the pathway is the production of the pentaketide 1,3,6,8-tetrahydroxynaphthalene (1,3,6,8-THN or T4HN) by the polyketide synthase PfmaE though condensation of acetyl-CoA with malonyl-CoA. T4HN is not stable and easily oxidizes into the stable form flaviolin. T4HN is also substrate of the hydroxynaphthalene reductase PfmaG to yield scytalone. The scytalone dehydratase PfmaJ then reduces scytalone to 1,3,8-THN. 1,3,8-THN is then substrate of the hydroxynaphthalene reductase PfmaI to yield vermelone. Vermelone is further converted by the multicopper oxidase PfmaD to 1,8-DHN. Finally the laccase PFICI_06862 transforms 1,8-DHN to DHN-melanin. The roles of the 5-oxoprolinase PfmaA and the proline iminopeptidase PfmaB within the cluster have not been elucidated yet. In Pestalotiopsis fici (strain W106-1 / CGMCC3.15140), this protein is 5-oxoprolinase PfmaA.